A 1876-amino-acid chain; its full sequence is 1,3-beta-glucan synthase component FKS1 (1876 aa).

Polar residues-rich tracts occupy residues 1–25 (MNTD…QSQE) and 60–71 (QPPNESYDQDYT). The interval 1–108 (MNTDQQPYQG…PGTPGYDSYG (108 aa)) is disordered. The Cytoplasmic segment spans residues 1–454 (MNTDQQPYQG…WLHLVTNFNR (454 aa)). A Glycyl lysine isopeptide (Lys-Gly) (interchain with G-Cter in ubiquitin) cross-link involves residue K259. Residues T269 and T272 each carry the phosphothreonine modification. Residues K275 and K386 each participate in a glycyl lysine isopeptide (Lys-Gly) (interchain with G-Cter in ubiquitin) cross-link. The chain crosses the membrane as a helical span at residues 455–475 (IWVMHISIFWMYFAYNSPTFY). Residues 476–492 (THNYQQLVDNQPLAAYK) lie on the Extracellular side of the membrane. Residues 493-513 (WASCALGGTVASLIQIVATLC) traverse the membrane as a helical segment. At 514-531 (EWSFVPRKWAGAQHLSRR) the chain is on the cytoplasmic side. Residues 532–552 (FWFLCIIFGINLGPIIFVFAY) traverse the membrane as a helical segment. The Extracellular portion of the chain corresponds to 553 to 563 (DKDTVYSTAAH). The chain crosses the membrane as a helical span at residues 564-584 (VVAAVMFFVAVATIIFFSIMP). The Cytoplasmic segment spans residues 585–621 (LGGLFTSYMKKSTRRYVASQTFTAAFAPLHGLDRWMS). Residues 622–642 (YLVWVTVFAAKYSESYYFLVL) form a helical membrane-spanning segment. Topologically, residues 643 to 678 (SLRDPIRILSTTAMRCTGEYWWGAVLCKVQPKIVLG) are extracellular. A helical membrane pass occupies residues 679–699 (LVIATDFILFFLDTYLWYIIV). The Cytoplasmic portion of the chain corresponds to 700-1358 (NTIFSVGKSF…QPAVDWVRRY (659 aa)). Residues K910 and K915 each participate in a glycyl lysine isopeptide (Lys-Gly) (interchain with G-Cter in ubiquitin) cross-link. Residues 1359 to 1379 (TLSIFIVFWIAFVPIVVQELI) form a helical membrane-spanning segment. Over 1380–1444 (ERGLWKATQR…RIPFSILYSR (65 aa)) the chain is Extracellular. A helical membrane pass occupies residues 1445–1465 (FAGSAIYMGARSMLMLLFGTV). Over 1466–1469 (AHWQ) the chain is Cytoplasmic. The helical transmembrane segment at 1470-1490 (APLLWFWASLSSLIFAPFVFN) threads the bilayer. At 1491-1560 (PHQFAWEDFF…DASRAHRTNL (70 aa)) the chain is on the extracellular side. Residues K1539 and K1547 each participate in a glycyl lysine isopeptide (Lys-Gly) (interchain with G-Cter in ubiquitin) cross-link. Residues 1561–1581 (IMAEIIPCAIYAAGCFIAFTF) form a helical membrane-spanning segment. The Cytoplasmic segment spans residues 1582-1601 (INAQTGVKTTDDDRVNSVLR). The chain crosses the membrane as a helical span at residues 1602-1622 (IIICTLAPIAVNLGVLFFCMG). Over 1623-1643 (MSCCSGPLFGMCCKKTGSVMA) the chain is Extracellular. The helical transmembrane segment at 1644-1664 (GIAHGVAVIVHIAFFIVMWVL) threads the bilayer. Topologically, residues 1665-1672 (ESFNFVRM) are cytoplasmic. Residues 1673–1695 (LIGVVTCIQCQRLIFHCMTALML) form a helical membrane-spanning segment. Residues 1696 to 1802 (TREFKNDHAN…RKRMVKKYCS (107 aa)) lie on the Extracellular side of the membrane. Residues 1803–1823 (LYFLVLAIFAGCIIGPAVASA) traverse the membrane as a helical segment. Over 1824–1876 (KIHKHIGDSLDGVVHNLFQPINTTNNDTGSQMSTYQSHYYTHTPSLKTWSTIK) the chain is Cytoplasmic.

It belongs to the glycosyltransferase 48 family. As to quaternary structure, component of the 1,3-beta-glucan synthase (GS) complex, composed of two alternate catalytic subunits FKS1 or GSC2, and a regulatory subunit RHO1. Interacts with RHO1, which is a GTP-binding protein.

The protein resides in the mitochondrion. It localises to the cell membrane. It carries out the reaction [(1-&gt;3)-beta-D-glucosyl](n) + UDP-alpha-D-glucose = [(1-&gt;3)-beta-D-glucosyl](n+1) + UDP + H(+). Functionally, alternate catalytic subunit of the 1,3-beta-glucan synthase (GS) complex. Synthesizes 1,3-beta-glucan, a major structural component of the yeast cell wall. Involved in cell wall synthesis, maintenance and remodeling. In Saccharomyces cerevisiae (strain ATCC 204508 / S288c) (Baker's yeast), this protein is 1,3-beta-glucan synthase component FKS1 (FKS1).